Consider the following 434-residue polypeptide: Protein FAM83A (434 aa).

The tract at residues 1 to 298 (MSRSRHLGKI…LYASSKPVMG (298 aa)) is DUF1669. The interval 76 to 97 (REPPCPPDTLGGAEAGPKGLDS) is disordered. 4 positions are modified to phosphoserine: serine 301, serine 327, serine 348, and serine 357. The segment at 308-399 (VPPGAAPANG…HDGPPAAVYS (92 aa)) is disordered. Composition is skewed to low complexity over residues 320–332 (SSSS…RTSS) and 348–357 (SVSASSGPCS). Over residues 358 to 369 (PAAPHPPPPPRF) the composition is skewed to pro residues.

This sequence belongs to the FAM83 family. Directly interacts (via DUF1669) with casein kinase isoforms CSNK1A1, CSNK1A1L, CSNK1D and CSNK1E. Phosphorylated upon EGFR activation in a breast cancer cell line.

Its subcellular location is the cytoplasm. In terms of biological role, involved in mitochondrial maintenance during adipogenesis. May be acting by playing a role in the maintenance of normal mitochondrial function. The polypeptide is Protein FAM83A (Homo sapiens (Human)).